A 305-amino-acid chain; its full sequence is UDP-3-O-acyl-N-acetylglucosamine deacetylase (305 aa).

The Zn(2+) site is built by histidine 78, histidine 237, and aspartate 241. Catalysis depends on histidine 264, which acts as the Proton donor.

It belongs to the LpxC family. Zn(2+) serves as cofactor.

The enzyme catalyses a UDP-3-O-[(3R)-3-hydroxyacyl]-N-acetyl-alpha-D-glucosamine + H2O = a UDP-3-O-[(3R)-3-hydroxyacyl]-alpha-D-glucosamine + acetate. It participates in glycolipid biosynthesis; lipid IV(A) biosynthesis; lipid IV(A) from (3R)-3-hydroxytetradecanoyl-[acyl-carrier-protein] and UDP-N-acetyl-alpha-D-glucosamine: step 2/6. Functionally, catalyzes the hydrolysis of UDP-3-O-myristoyl-N-acetylglucosamine to form UDP-3-O-myristoylglucosamine and acetate, the committed step in lipid A biosynthesis. In Burkholderia lata (strain ATCC 17760 / DSM 23089 / LMG 22485 / NCIMB 9086 / R18194 / 383), this protein is UDP-3-O-acyl-N-acetylglucosamine deacetylase.